Reading from the N-terminus, the 3003-residue chain is MAX gene-associated protein (3003 aa).

Residues Lys-4 and Lys-178 each participate in a glycyl lysine isopeptide (Lys-Gly) (interchain with G-Cter in SUMO2) cross-link. The T-box DNA-binding region spans 84–260 (MWNEFHNRST…YNPFAKGFRD (177 aa)). Residues 259–277 (RDDGLSSKPQREGKQRNSS) are compositionally biased toward basic and acidic residues. Positions 259–290 (RDDGLSSKPQREGKQRNSSDQEGNSVSSSPAH) are disordered. Over residues 278 to 288 (DQEGNSVSSSP) the composition is skewed to polar residues. Residues Lys-323, Lys-329, Lys-348, Lys-431, Lys-458, Lys-463, and Lys-480 each participate in a glycyl lysine isopeptide (Lys-Gly) (interchain with G-Cter in SUMO2) cross-link. Phosphoserine is present on Ser-531. Residues 553–647 (ILDNSSTERI…NIPVGPGSTF (95 aa)) form a disordered region. Lys-567 participates in a covalent cross-link: Glycyl lysine isopeptide (Lys-Gly) (interchain with G-Cter in SUMO2). The span at 595 to 607 (KTVTASHSASPNT) shows a compositional bias: polar residues. The residue at position 604 (Ser-604) is a Phosphoserine. Residues Lys-610, Lys-651, Lys-782, Lys-788, Lys-814, and Lys-823 each participate in a glycyl lysine isopeptide (Lys-Gly) (interchain with G-Cter in SUMO2) cross-link. The segment covering 610-621 (KRGRPRKLRLSK) has biased composition (basic residues). At Ser-848 the chain carries Phosphoserine. The span at 871–913 (KQSTISPSTSHSVKPQSVTTASRKTKAQNKQTTLSGRTKSSYK) shows a compositional bias: polar residues. Disordered regions lie at residues 871 to 946 (KQST…TSDN) and 967 to 987 (LRQA…GLSK). A Phosphoserine modification is found at Ser-921. Lys-925 participates in a covalent cross-link: Glycyl lysine isopeptide (Lys-Gly) (interchain with G-Cter in SUMO2). Residues 937–946 (KNSLSSTSDN) show a composition bias toward polar residues. The segment covering 969–978 (QAQQQHLQQQ) has biased composition (low complexity). Glycyl lysine isopeptide (Lys-Gly) (interchain with G-Cter in SUMO2) cross-links involve residues Lys-987 and Lys-1088. Residues 1111 to 1130 (LGEEGREGGGVREDEEQLKE) are disordered. The span at 1113-1122 (EEGREGGGVR) shows a compositional bias: basic and acidic residues. Glycyl lysine isopeptide (Lys-Gly) (interchain with G-Cter in SUMO2) cross-links involve residues Lys-1136, Lys-1158, Lys-1194, and Lys-1202. Disordered stretches follow at residues 1186–1215 (QPDL…NPVI), 1246–1277 (QRQL…TKEL), 1297–1323 (SQEK…RSPG), and 1376–1424 (RGEK…DISP). 2 stretches are compositionally biased toward low complexity: residues 1248-1269 (QLSP…YSSP) and 1303-1315 (KSSC…SSTS). A phosphoserine mark is found at Ser-1423 and Ser-1450. Residues Lys-1454 and Lys-1495 each participate in a glycyl lysine isopeptide (Lys-Gly) (interchain with G-Cter in SUMO2) cross-link. Disordered regions lie at residues 1476-1508 (AKVA…RSGK), 1722-1746 (PPVS…SNNV), 1856-1885 (ISPP…PVGT), 1920-1954 (IKKE…KALD), 1964-1983 (SGII…GGDL), and 1988-2038 (TLRE…AGSK). 3 stretches are compositionally biased toward polar residues: residues 1488-1507 (LPST…NRSG), 1735-1746 (PVTTPQISSNNV), and 1859-1880 (PETQ…STGG). Residues Lys-1937 and Lys-1944 each participate in a glycyl lysine isopeptide (Lys-Gly) (interchain with G-Cter in SUMO2) cross-link. A compositionally biased stretch (polar residues) spans 1964 to 1976 (SGIIASENTSNNS). Glycyl lysine isopeptide (Lys-Gly) (interchain with G-Cter in SUMO2) cross-links involve residues Lys-2060 and Lys-2084. Residues 2087 to 2110 (LSGNQVKEQQSNSQAEAKKDCEDS) are disordered. Residues 2088–2101 (SGNQVKEQQSNSQA) show a composition bias toward polar residues. Glycyl lysine isopeptide (Lys-Gly) (interchain with G-Cter in SUMO2) cross-links involve residues Lys-2104, Lys-2152, and Lys-2179. Residue Arg-2206 is modified to Omega-N-methylarginine. A disordered region spans residues 2207–2255 (GSRHFQGHLLLPREQMKPKQQTKDGRSSAADFTVLDLEDEDEEDEKTDD). The segment covering 2220–2232 (EQMKPKQQTKDGR) has biased composition (basic and acidic residues). Lys-2225 participates in a covalent cross-link: Glycyl lysine isopeptide (Lys-Gly) (interchain with G-Cter in SUMO2). The span at 2242 to 2255 (DLEDEDEEDEKTDD) shows a compositional bias: acidic residues. Residues Lys-2317, Lys-2352, Lys-2396, and Lys-2471 each participate in a glycyl lysine isopeptide (Lys-Gly) (interchain with G-Cter in SUMO2) cross-link. The 52-residue stretch at 2362-2413 (YYRRTHTANERRRRGEMRDLFEKLKITLGLLHSSKVSKSLILNRAFSEIQGL) folds into the bHLH domain. A Phosphoserine modification is found at Ser-2480. The interval 2515-2534 (KRDQATENASPSDTPHSSAN) is disordered. Polar residues predominate over residues 2520–2534 (TENASPSDTPHSSAN). Glycyl lysine isopeptide (Lys-Gly) (interchain with G-Cter in SUMO2) cross-links involve residues Lys-2568 and Lys-2618. Residues 2629–2651 (SEASSLKDTERISSRGNHRDSRK) are compositionally biased toward basic and acidic residues. Residues 2629–2654 (SEASSLKDTERISSRGNHRDSRKALG) are disordered. Residue Lys-2724 forms a Glycyl lysine isopeptide (Lys-Gly) (interchain with G-Cter in SUMO2) linkage. Residues Ser-2849 and Ser-2860 each carry the phosphoserine modification. Residues 2877-2917 (LVSHRKSSDGGQSTSGLPAEPESVSSPPILHMKTGPENSNT) are disordered. Lys-2979 participates in a covalent cross-link: Glycyl lysine isopeptide (Lys-Gly) (interchain with G-Cter in SUMO2).

As to quaternary structure, component of some MLL1/MLL complex, at least composed of the core components KMT2A/MLL1, ASH2L, HCFC1/HCF1, WDR5 and RBBP5, as well as the facultative components BACC1, CHD8, E2F6, HSP70, INO80C, KANSL1, LAS1L, MAX, MCRS1, MGA, MYST1/MOF, PELP1, PHF20, PRP31, RING2, RUVB1/TIP49A, RUVB2/TIP49B, SENP3, TAF1, TAF4, TAF6, TAF7, TAF9 and TEX10. Interacts with ZMYND11. Interacts with MAX. Requires heterodimerization with MAX for E-box binding. Highly expressed in germ cells and granulosa cells.

The protein resides in the nucleus. In terms of biological role, functions as a dual-specificity transcription factor, regulating the expression of both MAX-network and T-box family target genes. Functions as a repressor or an activator. Binds to 5'-AATTTCACACCTAGGTGTGAAATT-3' core sequence and seems to regulate MYC-MAX target genes. Suppresses transcriptional activation by MYC and inhibits MYC-dependent cell transformation. Function activated by heterodimerization with MAX. This heterodimerization serves the dual function of both generating an E-box-binding heterodimer and simultaneously blocking interaction of a corepressor. The sequence is that of MAX gene-associated protein from Mus musculus (Mouse).